The following is a 75-amino-acid chain: Small ribosomal subunit protein bS18 (75 aa).

Belongs to the bacterial ribosomal protein bS18 family. In terms of assembly, part of the 30S ribosomal subunit. Forms a tight heterodimer with protein bS6.

Binds as a heterodimer with protein bS6 to the central domain of the 16S rRNA, where it helps stabilize the platform of the 30S subunit. In Thermosipho melanesiensis (strain DSM 12029 / CIP 104789 / BI429), this protein is Small ribosomal subunit protein bS18.